The sequence spans 528 residues: Glucosidase 2 subunit beta (528 aa).

Positions 1 to 14 (MLLPLLLLLPMCWA) are cleaved as a signal peptide. Ser-24 is modified (phosphoserine; by FAM20C). LDL-receptor class A domains are found at residues 37–71 (FTCL…AACP) and 72–113 (NGSF…VICE). 2 disulfides stabilise this stretch: Cys-39–Cys-58 and Cys-56–Cys-70. Asp-49 provides a ligand contact to substrate. Gln-50, Asp-53, Tyr-55, Asp-57, Asp-63, and Glu-64 together coordinate Ca(2+). Asp-53 lines the substrate pocket. N-linked (GlcNAc...) asparagine glycosylation is present at Asn-72. 3 disulfide bridges follow: Cys-77–Cys-99, Cys-97–Cys-112, and Cys-100–Cys-116. Ser-89 is subject to Phosphoserine; by PKC. 6 residues coordinate Ca(2+): Arg-91, Asp-94, Val-96, Asp-98, Asp-104, and Glu-105. Lys-166 carries the N6-succinyllysine modification. Ser-168 is modified (phosphoserine; by FAM20C). EF-hand domains follow at residues 209–244 (QEQE…DTDG) and 245–290 (DGAL…TDLP). Ca(2+) contacts are provided by Asp-222, Asp-224, Asp-226, Thr-228, and Glu-233. Disordered stretches follow at residues 234-266 (LQTH…TDAT) and 281-357 (RSEA…DKMP). Residues 247 to 258 (ALSEAEAQALLS) are compositionally biased toward low complexity. The segment covering 312 to 337 (TEEEEEEEEEEEEEAEEEEEEEDSEE) has biased composition (acidic residues). Residues 338 to 348 (APPPLSPPQPA) show a composition bias toward pro residues. Ser-383 and Ser-390 each carry phosphoserine; by PKC. The MRH domain occupies 413–514 (SQCYELTTNE…ELMTPAACPE (102 aa)). A disulfide bond links Cys-415 and Cys-428. Ser-434 is subject to Phosphoserine; by PKC. 2 disulfides stabilise this stretch: Cys-471/Cys-500 and Cys-485/Cys-512. Asn-476 is a glycosylation site (N-linked (GlcNAc...) asparagine). The short motif at 525-528 (HDEL) is the Prevents secretion from ER element.

As to quaternary structure, heterodimer of a catalytic alpha subunit (GANAB) and a beta subunit (PRKCSH). Binds glycosylated PTPRC.

The protein resides in the endoplasmic reticulum. It functions in the pathway glycan metabolism; N-glycan metabolism. Functionally, regulatory subunit of glucosidase II that cleaves sequentially the 2 innermost alpha-1,3-linked glucose residues from the Glc(2)Man(9)GlcNAc(2) oligosaccharide precursor of immature glycoproteins. Required for efficient PKD1/Polycystin-1 biogenesis and trafficking to the plasma membrane of the primary cilia. The sequence is that of Glucosidase 2 subunit beta from Homo sapiens (Human).